The sequence spans 303 residues: Propanal dehydrogenase (CoA-propanoylating) (303 aa).

Residue 12 to 15 coordinates NAD(+); that stretch reads SGNI. Cys127 acts as the Acyl-thioester intermediate in catalysis. Residues 158-166 and Asn277 each bind NAD(+); that span reads SAGPGTRAN.

It belongs to the acetaldehyde dehydrogenase family. In terms of assembly, monomer. Forms a heterotetramer composed of two aldolase (HsaF) and two dehydrogenase (HsaG) subunits.

The catalysed reaction is propanal + NAD(+) + CoA = propanoyl-CoA + NADH + H(+). It catalyses the reaction acetaldehyde + NAD(+) + CoA = acetyl-CoA + NADH + H(+). Its function is as follows. Involved in cholesterol degradation. Catalyzes the conversion of propanal to propanoyl-CoA, using NAD(+) and coenzyme A. In Mycobacterium bovis (strain ATCC BAA-935 / AF2122/97), this protein is Propanal dehydrogenase (CoA-propanoylating).